Here is a 310-residue protein sequence, read N- to C-terminus: Olfactory receptor 5AR1 (310 aa).

The Extracellular segment spans residues 1–28; sequence MDKENSSMVTEFIFMGITQDPQMEIIFF. Asparagine 5 carries N-linked (GlcNAc...) asparagine glycosylation. The chain crosses the membrane as a helical span at residues 29–49; it reads VVFLIVYLVNVVGNIGMIILI. Topologically, residues 50 to 58 are cytoplasmic; it reads TTDTQLHTP. Residues 59–79 form a helical membrane-spanning segment; sequence MYFFLCNLSFVDLGYSSAIAP. Residues 80-100 lie on the Extracellular side of the membrane; it reads RMLADFLTNHKVISFSSCATQ. An intrachain disulfide couples cysteine 97 to cysteine 189. Residues 101 to 120 form a helical membrane-spanning segment; that stretch reads FAFFVGFVDAECYVLAAMAY. Topologically, residues 121–139 are cytoplasmic; it reads GRFVAICRPLHYSTFMSKQ. A helical transmembrane segment spans residues 140–160; the sequence is VCLALMLGSYLAGLVSLVAHT. The Extracellular portion of the chain corresponds to 161–205; sequence TLTFSLSYCGSNIINHFFCEIPPLLALSCSDTYISEILLFSLCGF. The helical transmembrane segment at 206-226 threads the bilayer; sequence IEFSTILIIFISYTFILVAII. Residues 227–239 lie on the Cytoplasmic side of the membrane; sequence RMRSAEGRLKAFS. Residues 240–260 traverse the membrane as a helical segment; it reads TCGSHLTGITLFYGTVMFMYL. At 261-271 the chain is on the extracellular side; sequence RPTSSYSLDQD. A helical membrane pass occupies residues 272 to 292; sequence KWASVFYTVIIPMLNPLIYSL. Topologically, residues 293-310 are cytoplasmic; it reads RNKDVKAAFKKLIGKKSQ.

It belongs to the G-protein coupled receptor 1 family.

Its subcellular location is the cell membrane. In terms of biological role, odorant receptor. This Homo sapiens (Human) protein is Olfactory receptor 5AR1.